Reading from the N-terminus, the 106-residue chain is Small ribosomal subunit protein mS33 (106 aa).

Serine 2 is modified (N-acetylserine). The segment at glutamate 81 to lysine 106 is disordered. A compositionally biased stretch (basic residues) spans arginine 84 to proline 94. Residues arginine 95 to lysine 106 show a composition bias toward basic and acidic residues.

This sequence belongs to the mitochondrion-specific ribosomal protein mS33 family. Component of the mitochondrial ribosome small subunit (28S) which comprises a 12S rRNA and about 30 distinct proteins.

The protein localises to the mitochondrion. In Mus musculus (Mouse), this protein is Small ribosomal subunit protein mS33 (Mrps33).